We begin with the raw amino-acid sequence, 109 residues long: Cell division protein ZapA (109 aa).

Residues proline 21 to arginine 99 are a coiled coil.

The protein belongs to the ZapA family. Type 1 subfamily. In terms of assembly, homodimer. Interacts with FtsZ.

It localises to the cytoplasm. Functionally, activator of cell division through the inhibition of FtsZ GTPase activity, therefore promoting FtsZ assembly into bundles of protofilaments necessary for the formation of the division Z ring. It is recruited early at mid-cell but it is not essential for cell division. The polypeptide is Cell division protein ZapA (Pectobacterium carotovorum subsp. carotovorum (strain PC1)).